Here is a 211-residue protein sequence, read N- to C-terminus: Urease accessory protein UreG (211 aa).

Residue 16 to 23 (GPVGSGKT) coordinates GTP.

It belongs to the SIMIBI class G3E GTPase family. UreG subfamily. As to quaternary structure, homodimer. UreD, UreF and UreG form a complex that acts as a GTP-hydrolysis-dependent molecular chaperone, activating the urease apoprotein by helping to assemble the nickel containing metallocenter of UreC. The UreE protein probably delivers the nickel.

Its subcellular location is the cytoplasm. Facilitates the functional incorporation of the urease nickel metallocenter. This process requires GTP hydrolysis, probably effectuated by UreG. This is Urease accessory protein UreG from Janthinobacterium sp. (strain Marseille) (Minibacterium massiliensis).